The following is a 176-amino-acid chain: Large ribosomal subunit protein uL10 (176 aa).

It belongs to the universal ribosomal protein uL10 family. Part of the ribosomal stalk of the 50S ribosomal subunit. The N-terminus interacts with L11 and the large rRNA to form the base of the stalk. The C-terminus forms an elongated spine to which L12 dimers bind in a sequential fashion forming a multimeric L10(L12)X complex.

In terms of biological role, forms part of the ribosomal stalk, playing a central role in the interaction of the ribosome with GTP-bound translation factors. This Streptomyces coelicolor (strain ATCC BAA-471 / A3(2) / M145) protein is Large ribosomal subunit protein uL10 (rplJ).